We begin with the raw amino-acid sequence, 129 residues long: UPF0325 protein HCH_00487 (129 aa).

This sequence belongs to the UPF0325 family.

This Hahella chejuensis (strain KCTC 2396) protein is UPF0325 protein HCH_00487.